The following is a 119-amino-acid chain: Holo-[acyl-carrier-protein] synthase (119 aa).

Mg(2+) is bound by residues Asp-8 and Glu-58.

This sequence belongs to the P-Pant transferase superfamily. AcpS family. Mg(2+) is required as a cofactor.

It localises to the cytoplasm. It catalyses the reaction apo-[ACP] + CoA = holo-[ACP] + adenosine 3',5'-bisphosphate + H(+). Functionally, transfers the 4'-phosphopantetheine moiety from coenzyme A to a Ser of acyl-carrier-protein. The protein is Holo-[acyl-carrier-protein] synthase of Oceanobacillus iheyensis (strain DSM 14371 / CIP 107618 / JCM 11309 / KCTC 3954 / HTE831).